The chain runs to 1519 residues: Putative lipoprotein YghJ (1519 aa).

The N-terminal stretch at 1–23 (MNKKFKYKKSLLAAILSATLLAG) is a signal peptide. Disordered regions lie at residues 22-107 (AGCD…GATC) and 226-247 (NAATDKAPSTHTSPVVPVTTPG). The N-palmitoyl cysteine moiety is linked to residue Cys24. The S-diacylglycerol cysteine moiety is linked to residue Cys24. Over residues 31 to 42 (SSSDTPPVDSGT) the composition is skewed to low complexity. Residues 51–77 (DPTPNPEPTPEPTPDPEPTPEPIPDPE) show a composition bias toward pro residues. Residues 97-107 (GGSQRVTGATC) are compositionally biased toward polar residues. Low complexity predominate over residues 234–247 (STHTSPVVPVTTPG). The 301-residue stretch at 1080-1380 (GNMQSTGLWA…MYAQLKEWAE (301 aa)) folds into the Peptidase M60 domain. The disordered stretch occupies residues 1497 to 1519 (DLPKPEQGPETINQVTEHKMSAE).

The protein to V.cholerae AcfD (VC_0845).

It is found in the cell membrane. In terms of biological role, may be a substrate of the type II secretion system beta (T2SS-beta). This is Putative lipoprotein YghJ (yghJ) from Escherichia coli O78:H11 (strain H10407 / ETEC).